Reading from the N-terminus, the 131-residue chain is Large ribosomal subunit protein bL19 (131 aa).

This sequence belongs to the bacterial ribosomal protein bL19 family.

Functionally, this protein is located at the 30S-50S ribosomal subunit interface and may play a role in the structure and function of the aminoacyl-tRNA binding site. The chain is Large ribosomal subunit protein bL19 from Polynucleobacter necessarius subsp. necessarius (strain STIR1).